Reading from the N-terminus, the 82-residue chain is Consomatin Mao1 (82 aa).

The first 22 residues, 1 to 22 (MQTASWVMVMMMVWITAPLSEG), serve as a signal peptide directing secretion. Residues 23–57 (GKLNDVIRGLVPDDVTPQLILRSLFFHRPSDSVVR) constitute a propeptide that is removed on maturation. C65 and C70 form a disulfide bridge. W67 carries the post-translational modification D-tryptophan. P71, P72, and P74 each carry 4-hydroxyproline. Positions 75–82 (WRRPNGKG) are excised as a propeptide.

It belongs to the conotoxin C superfamily. Consomatin family. In terms of tissue distribution, expressed by the venom duct.

The protein localises to the secreted. Its function is as follows. Moderately activates human somatostatin receptors (SSTR) with a preferential activation of SSTR1 and SSTR4. In vivo, does not cause behavioral changes in mice within a few minutes of intracranial injection, but causes a progressive loss of movement thereafter. Four to five hours after injection, mice recover, even with the highest dose tested. Shows antinociception and antihyperalgesia activities in two mouse models of acute pain, most probably by acting outside the central nervous system. This chain is Consomatin Mao1, found in Conus maioensis (Sea snail).